Consider the following 240-residue polypeptide: 6-carboxyhexanoate--CoA ligase (240 aa).

Belongs to the BioW family. Homodimer. Requires Mg(2+) as cofactor.

The enzyme catalyses heptanedioate + ATP + CoA = 6-carboxyhexanoyl-CoA + AMP + diphosphate. The protein operates within metabolic intermediate metabolism; pimeloyl-CoA biosynthesis; pimeloyl-CoA from pimelate: step 1/1. Functionally, catalyzes the transformation of pimelate into pimeloyl-CoA with concomitant hydrolysis of ATP to AMP. This is 6-carboxyhexanoate--CoA ligase from Aquifex aeolicus (strain VF5).